We begin with the raw amino-acid sequence, 345 residues long: Myb/SANT-like DNA-binding domain-containing protein 4 (345 aa).

The Myb-like domain occupies 4–77 (LKRKRKSNFS…EVKRRYLDWR (74 aa)). Lysine 9 is covalently cross-linked (Glycyl lysine isopeptide (Lys-Gly) (interchain with G-Cter in SUMO2)). At serine 106 the chain carries Phosphoserine. Glycyl lysine isopeptide (Lys-Gly) (interchain with G-Cter in SUMO2) cross-links involve residues lysine 114 and lysine 142. A disordered region spans residues 143-175 (VEEEERDPQSPEFEIEEEEEMLSSVIPDSRREN). Phosphothreonine is present on threonine 188. A coiled-coil region spans residues 203-345 (LLVNIEKQKL…LRIQKEGHLQ (143 aa)). Residues lysine 237, lysine 254, and lysine 273 each participate in a glycyl lysine isopeptide (Lys-Gly) (interchain with G-Cter in SUMO2) cross-link.

The chain is Myb/SANT-like DNA-binding domain-containing protein 4 (MSANTD4) from Homo sapiens (Human).